Reading from the N-terminus, the 332-residue chain is Tetraacyldisaccharide 4'-kinase (332 aa).

Residue 55–62 (GVGGSGKT) coordinates ATP.

The protein belongs to the LpxK family.

The enzyme catalyses a lipid A disaccharide + ATP = a lipid IVA + ADP + H(+). It participates in glycolipid biosynthesis; lipid IV(A) biosynthesis; lipid IV(A) from (3R)-3-hydroxytetradecanoyl-[acyl-carrier-protein] and UDP-N-acetyl-alpha-D-glucosamine: step 6/6. Functionally, transfers the gamma-phosphate of ATP to the 4'-position of a tetraacyldisaccharide 1-phosphate intermediate (termed DS-1-P) to form tetraacyldisaccharide 1,4'-bis-phosphate (lipid IVA). In Acidithiobacillus ferrooxidans (strain ATCC 53993 / BNL-5-31) (Leptospirillum ferrooxidans (ATCC 53993)), this protein is Tetraacyldisaccharide 4'-kinase.